A 498-amino-acid polypeptide reads, in one-letter code: Lysine--tRNA ligase (498 aa).

Mg(2+) contacts are provided by Glu-401 and Glu-408.

This sequence belongs to the class-II aminoacyl-tRNA synthetase family. In terms of assembly, homodimer. Mg(2+) is required as a cofactor.

It localises to the cytoplasm. The catalysed reaction is tRNA(Lys) + L-lysine + ATP = L-lysyl-tRNA(Lys) + AMP + diphosphate. The polypeptide is Lysine--tRNA ligase (Dehalococcoides mccartyi (strain ATCC BAA-2266 / KCTC 15142 / 195) (Dehalococcoides ethenogenes (strain 195))).